The primary structure comprises 330 residues: Ribosomal RNA small subunit methyltransferase H (330 aa).

S-adenosyl-L-methionine contacts are provided by residues 48–50, aspartate 67, leucine 101, aspartate 115, and glutamine 122; that span reads GGH.

It belongs to the methyltransferase superfamily. RsmH family.

It localises to the cytoplasm. It catalyses the reaction cytidine(1402) in 16S rRNA + S-adenosyl-L-methionine = N(4)-methylcytidine(1402) in 16S rRNA + S-adenosyl-L-homocysteine + H(+). Specifically methylates the N4 position of cytidine in position 1402 (C1402) of 16S rRNA. This is Ribosomal RNA small subunit methyltransferase H from Pseudarthrobacter chlorophenolicus (strain ATCC 700700 / DSM 12829 / CIP 107037 / JCM 12360 / KCTC 9906 / NCIMB 13794 / A6) (Arthrobacter chlorophenolicus).